Reading from the N-terminus, the 338-residue chain is E3 ubiquitin-protein ligase SPL1 (338 aa).

The helical transmembrane segment at methionine 1–arginine 21 threads the bilayer. The Chloroplast intermembrane segment spans residues serine 22 to lysine 223. A helical transmembrane segment spans residues tyrosine 224–leucine 246. At lysine 247–histidine 338 the chain is on the cytoplasmic side. An RING-type zinc finger spans residues cysteine 291–arginine 326.

The protein resides in the plastid. It is found in the chloroplast outer membrane. It carries out the reaction S-ubiquitinyl-[E2 ubiquitin-conjugating enzyme]-L-cysteine + [acceptor protein]-L-lysine = [E2 ubiquitin-conjugating enzyme]-L-cysteine + N(6)-ubiquitinyl-[acceptor protein]-L-lysine.. The protein operates within protein modification; protein ubiquitination. Its function is as follows. Possesses E3 ubiquitin-protein ligase activity. This is E3 ubiquitin-protein ligase SPL1 from Arabidopsis thaliana (Mouse-ear cress).